A 322-amino-acid chain; its full sequence is Protein-L-isoaspartate O-methyltransferase (322 aa).

A disordered region spans residues 1-101; that stretch reads MSGERAKRFP…AKQGDRSAAP (101 aa). Residues 14 to 29 are compositionally biased toward basic and acidic residues; it reads EDLKREPRKPEGRVAE. 2 stretches are compositionally biased toward low complexity: residues 33–51 and 67–91; these read AGDAARQRLTAAAAVPAAA and AANPARAKQHAPAAPGAAKRAPQGG. Serine 170 is an active-site residue.

Belongs to the methyltransferase superfamily. L-isoaspartyl/D-aspartyl protein methyltransferase family.

Its subcellular location is the cytoplasm. The catalysed reaction is [protein]-L-isoaspartate + S-adenosyl-L-methionine = [protein]-L-isoaspartate alpha-methyl ester + S-adenosyl-L-homocysteine. Catalyzes the methyl esterification of L-isoaspartyl residues in peptides and proteins that result from spontaneous decomposition of normal L-aspartyl and L-asparaginyl residues. It plays a role in the repair and/or degradation of damaged proteins. The polypeptide is Protein-L-isoaspartate O-methyltransferase (Burkholderia pseudomallei (strain 668)).